Here is a 336-residue protein sequence, read N- to C-terminus: Tyrosine phosphatase-like protein H1 (336 aa).

Residues 27 to 295 form the Tyrosine-protein phosphatase domain; sequence IKKEHHKLMK…EICYRVLCEA (269 aa).

It belongs to the protein-tyrosine phosphatase family.

This is Tyrosine phosphatase-like protein H1 (H1) from Microplitis demolitor (Parasitoid wasp).